The following is a 110-amino-acid chain: Large ribosomal subunit protein uL22 (110 aa).

The protein belongs to the universal ribosomal protein uL22 family. Part of the 50S ribosomal subunit.

This protein binds specifically to 23S rRNA; its binding is stimulated by other ribosomal proteins, e.g. L4, L17, and L20. It is important during the early stages of 50S assembly. It makes multiple contacts with different domains of the 23S rRNA in the assembled 50S subunit and ribosome. Its function is as follows. The globular domain of the protein is located near the polypeptide exit tunnel on the outside of the subunit, while an extended beta-hairpin is found that lines the wall of the exit tunnel in the center of the 70S ribosome. This chain is Large ribosomal subunit protein uL22, found in Mannheimia succiniciproducens (strain KCTC 0769BP / MBEL55E).